Reading from the N-terminus, the 143-residue chain is Ribonuclease P protein component (143 aa).

The disordered stretch occupies residues 111–143 (RVKRKGGGPGGNRRSAPPGSAPLTDDGRLRGEP).

The protein belongs to the RnpA family. As to quaternary structure, consists of a catalytic RNA component (M1 or rnpB) and a protein subunit.

The enzyme catalyses Endonucleolytic cleavage of RNA, removing 5'-extranucleotides from tRNA precursor.. Functionally, RNaseP catalyzes the removal of the 5'-leader sequence from pre-tRNA to produce the mature 5'-terminus. It can also cleave other RNA substrates such as 4.5S RNA. The protein component plays an auxiliary but essential role in vivo by binding to the 5'-leader sequence and broadening the substrate specificity of the ribozyme. This Deinococcus geothermalis (strain DSM 11300 / CIP 105573 / AG-3a) protein is Ribonuclease P protein component.